Here is a 430-residue protein sequence, read N- to C-terminus: Centrosomal protein CEP57L1 (430 aa).

Residue serine 45 is modified to Phosphoserine. Positions 46–213 form a coiled coil; that stretch reads PNNQALVSAL…HQRRLFQDRA (168 aa). Disordered stretches follow at residues 248 to 290 and 362 to 430; these read CLKR…GEPF and RKLQ…KWEQ. Composition is skewed to basic and acidic residues over residues 249–272, 362–372, and 421–430; these read LKREPPQHTDCRFRGPASERERPP, RKLQEKVENSR, and LRRDDVKWEQ. Positions 290 to 377 form a coiled coil; that stretch reads FSICDNLSEL…VENSRINESS (88 aa).

It belongs to the translokin family.

It localises to the cytoplasm. The protein localises to the cytoskeleton. The protein resides in the microtubule organizing center. It is found in the centrosome. Its function is as follows. Centrosomal protein which may be required for microtubule attachment to centrosomes. This Rattus norvegicus (Rat) protein is Centrosomal protein CEP57L1 (Cep57l1).